The sequence spans 446 residues: N-succinylarginine dihydrolase (446 aa).

Residues 19–28, N110, and 137–138 contribute to the substrate site; these read AGLSFGNVAS and HR. E174 is a catalytic residue. Residue R213 coordinates substrate. The active site involves H249. Substrate-binding residues include D251 and N364. C370 serves as the catalytic Nucleophile.

This sequence belongs to the succinylarginine dihydrolase family. Homodimer.

It carries out the reaction N(2)-succinyl-L-arginine + 2 H2O + 2 H(+) = N(2)-succinyl-L-ornithine + 2 NH4(+) + CO2. Its pathway is amino-acid degradation; L-arginine degradation via AST pathway; L-glutamate and succinate from L-arginine: step 2/5. Its function is as follows. Catalyzes the hydrolysis of N(2)-succinylarginine into N(2)-succinylornithine, ammonia and CO(2). This Burkholderia pseudomallei (strain 668) protein is N-succinylarginine dihydrolase.